Consider the following 159-residue polypeptide: Large ribosomal subunit protein bL17 (159 aa).

Residues 124–135 (EANRATRAAASK) show a composition bias toward low complexity. Residues 124–159 (EANRATRAAASKQAEEAKAEEAEATEAEAEETTEEK) are disordered. Acidic residues predominate over residues 145–159 (AEATEAEAEETTEEK).

This sequence belongs to the bacterial ribosomal protein bL17 family. Part of the 50S ribosomal subunit. Contacts protein L32.

This chain is Large ribosomal subunit protein bL17, found in Corynebacterium aurimucosum (strain ATCC 700975 / DSM 44827 / CIP 107346 / CN-1) (Corynebacterium nigricans).